Reading from the N-terminus, the 169-residue chain is Ribosome maturation factor RimM (169 aa).

The region spanning 97 to 169 (EDEVYFKDLI…KIVVDWEYDY (73 aa)) is the PRC barrel domain.

This sequence belongs to the RimM family. As to quaternary structure, binds ribosomal protein uS19.

Its subcellular location is the cytoplasm. Its function is as follows. An accessory protein needed during the final step in the assembly of 30S ribosomal subunit, possibly for assembly of the head region. Essential for efficient processing of 16S rRNA. May be needed both before and after RbfA during the maturation of 16S rRNA. It has affinity for free ribosomal 30S subunits but not for 70S ribosomes. This chain is Ribosome maturation factor RimM, found in Francisella tularensis subsp. holarctica (strain FTNF002-00 / FTA).